Consider the following 384-residue polypeptide: Dual-specificity RNA methyltransferase RlmN (384 aa).

Residue Glu105 is the Proton acceptor of the active site. Residues Glu111 to Asp350 enclose the Radical SAM core domain. Cysteines 118 and 355 form a disulfide. Cys125, Cys129, and Cys132 together coordinate [4Fe-4S] cluster. S-adenosyl-L-methionine-binding positions include Gly179–Glu180, Ser211, Ser233–His235, and Asn312. Cys355 (S-methylcysteine intermediate) is an active-site residue.

It belongs to the radical SAM superfamily. RlmN family. It depends on [4Fe-4S] cluster as a cofactor.

It is found in the cytoplasm. The catalysed reaction is adenosine(2503) in 23S rRNA + 2 reduced [2Fe-2S]-[ferredoxin] + 2 S-adenosyl-L-methionine = 2-methyladenosine(2503) in 23S rRNA + 5'-deoxyadenosine + L-methionine + 2 oxidized [2Fe-2S]-[ferredoxin] + S-adenosyl-L-homocysteine. The enzyme catalyses adenosine(37) in tRNA + 2 reduced [2Fe-2S]-[ferredoxin] + 2 S-adenosyl-L-methionine = 2-methyladenosine(37) in tRNA + 5'-deoxyadenosine + L-methionine + 2 oxidized [2Fe-2S]-[ferredoxin] + S-adenosyl-L-homocysteine. Specifically methylates position 2 of adenine 2503 in 23S rRNA and position 2 of adenine 37 in tRNAs. m2A2503 modification seems to play a crucial role in the proofreading step occurring at the peptidyl transferase center and thus would serve to optimize ribosomal fidelity. The polypeptide is Dual-specificity RNA methyltransferase RlmN (Escherichia coli O17:K52:H18 (strain UMN026 / ExPEC)).